The primary structure comprises 90 residues: UPF0237 protein NMB1653 (90 aa).

One can recognise an ACT domain in the interval 5 to 83 (VITVIGKDRV…LDIRMQNEEI (79 aa)).

Belongs to the UPF0237 family.

The polypeptide is UPF0237 protein NMB1653 (Neisseria meningitidis serogroup B (strain ATCC BAA-335 / MC58)).